The primary structure comprises 127 residues: Ribonuclease P protein component (127 aa).

Belongs to the RnpA family. As to quaternary structure, consists of a catalytic RNA component (M1 or rnpB) and a protein subunit.

The catalysed reaction is Endonucleolytic cleavage of RNA, removing 5'-extranucleotides from tRNA precursor.. Functionally, RNaseP catalyzes the removal of the 5'-leader sequence from pre-tRNA to produce the mature 5'-terminus. It can also cleave other RNA substrates such as 4.5S RNA. The protein component plays an auxiliary but essential role in vivo by binding to the 5'-leader sequence and broadening the substrate specificity of the ribozyme. This Prochlorococcus marinus (strain SARG / CCMP1375 / SS120) protein is Ribonuclease P protein component.